The chain runs to 507 residues: Histidine ammonia-lyase (507 aa).

Positions 140 to 142 (ASG) form a cross-link, 5-imidazolinone (Ala-Gly). The residue at position 141 (Ser141) is a 2,3-didehydroalanine (Ser).

The protein belongs to the PAL/histidase family. Post-translationally, contains an active site 4-methylidene-imidazol-5-one (MIO), which is formed autocatalytically by cyclization and dehydration of residues Ala-Ser-Gly.

The protein resides in the cytoplasm. The enzyme catalyses L-histidine = trans-urocanate + NH4(+). The protein operates within amino-acid degradation; L-histidine degradation into L-glutamate; N-formimidoyl-L-glutamate from L-histidine: step 1/3. In Yersinia enterocolitica serotype O:8 / biotype 1B (strain NCTC 13174 / 8081), this protein is Histidine ammonia-lyase.